Consider the following 392-residue polypeptide: UPF0229 protein CPF_1540 (392 aa).

The tract at residues 75–100 (VTTGTGEERRGDRISSDKRKAISNNK) is disordered. Over residues 80 to 94 (GEERRGDRISSDKRK) the composition is skewed to basic and acidic residues.

This sequence belongs to the UPF0229 family.

The sequence is that of UPF0229 protein CPF_1540 from Clostridium perfringens (strain ATCC 13124 / DSM 756 / JCM 1290 / NCIMB 6125 / NCTC 8237 / Type A).